Consider the following 147-residue polypeptide: Hemoglobin subunit delta (147 aa).

Positions 3–147 (NLTAAEKTQV…VANALAHKYH (145 aa)) constitute a Globin domain. Heme b is bound by residues histidine 64 and histidine 93.

Belongs to the globin family. Heterotetramer of two delta chains and two alpha chains. In terms of tissue distribution, red blood cells.

In Elephas maximus (Indian elephant), this protein is Hemoglobin subunit delta (HBD).